The primary structure comprises 568 residues: MPQARTIKHVFVTGGVASSLGKGLTASSLGELLTSRGLRVTMQKLDPYLNVDPGTMNPFQHGEVFVTEDGAETDLDIGHYERFLDRDLTRNANVTTGQVYSAVIAKERRGEYLGDTVQVIPHITDQIKARIRVMAEPDEDGRTPDVVITEVGGTVGDIESLPFLEACRQVRHDVGRDNCFFLHVSLVPYLAPSGELKTKPTQHSVAALRNIGIQPDALVCRADRELPEDLKRKIALMCDVDSDGVVACPDAPSIYDIPRVLHSEGLDAYLVRRLGLPFRDVDWSVWGDLLDRVHKPSERVRIALVGKYVDLPDAYLSVTEALRAGGFAHRAKVEIAWVPSDTCETESGAAHALSGMDGVLIPGGFGVRGIEGKLGAIRYARTHGIPTLGLCLGLQCMVIETARALAGLERANSTEFEEPCQHPVISTMADQHDVISGDRDMGGTMRLGSYPAKLVPGSVVAEAYGETEVAERHRHRYEVNNSYRDRLSKAGLVFSGTSPDGRLVEFVELPRDQHPFFVGTQAHPELKSRPTRPHPLFAAFVNAALEYRAAERLPVDISDSVQESTASV.

Residues 1–276 are amidoligase domain; that stretch reads MPQARTIKHV…DAYLVRRLGL (276 aa). Residue serine 18 participates in CTP binding. Residue serine 18 coordinates UTP. ATP is bound by residues 19–24 and aspartate 76; that span reads SLGKGL. The Mg(2+) site is built by aspartate 76 and glutamate 150. Residues 157 to 159, 197 to 202, and lysine 233 contribute to the CTP site; these read DIE and KTKPTQ. UTP is bound by residues 197–202 and lysine 233; that span reads KTKPTQ. In terms of domain architecture, Glutamine amidotransferase type-1 spans 301–550; it reads RIALVGKYVD…VNAALEYRAA (250 aa). Glycine 364 contributes to the L-glutamine binding site. Residue cysteine 391 is the Nucleophile; for glutamine hydrolysis of the active site. Residues 392–395, glutamate 415, and arginine 476 contribute to the L-glutamine site; that span reads LGLQ. Residues histidine 523 and glutamate 525 contribute to the active site.

This sequence belongs to the CTP synthase family. In terms of assembly, homotetramer.

It catalyses the reaction UTP + L-glutamine + ATP + H2O = CTP + L-glutamate + ADP + phosphate + 2 H(+). The enzyme catalyses L-glutamine + H2O = L-glutamate + NH4(+). The catalysed reaction is UTP + NH4(+) + ATP = CTP + ADP + phosphate + 2 H(+). It participates in pyrimidine metabolism; CTP biosynthesis via de novo pathway; CTP from UDP: step 2/2. Allosterically activated by GTP, when glutamine is the substrate; GTP has no effect on the reaction when ammonia is the substrate. The allosteric effector GTP functions by stabilizing the protein conformation that binds the tetrahedral intermediate(s) formed during glutamine hydrolysis. Inhibited by the product CTP, via allosteric rather than competitive inhibition. Functionally, catalyzes the ATP-dependent amination of UTP to CTP with either L-glutamine or ammonia as the source of nitrogen. Regulates intracellular CTP levels through interactions with the four ribonucleotide triphosphates. This Saccharopolyspora erythraea (strain ATCC 11635 / DSM 40517 / JCM 4748 / NBRC 13426 / NCIMB 8594 / NRRL 2338) protein is CTP synthase.